The chain runs to 136 residues: DNA-directed RNA polymerase subunit omega (136 aa).

A disordered region spans residues 79–107 (EPEAETVPLLSSSPAAAAVAPQSSSDDAA). The segment covering 89 to 107 (SSSPAAAAVAPQSSSDDAA) has biased composition (low complexity).

The protein belongs to the RNA polymerase subunit omega family. As to quaternary structure, the RNAP catalytic core consists of 2 alpha, 1 beta, 1 beta' and 1 omega subunit. When a sigma factor is associated with the core the holoenzyme is formed, which can initiate transcription.

It carries out the reaction RNA(n) + a ribonucleoside 5'-triphosphate = RNA(n+1) + diphosphate. In terms of biological role, promotes RNA polymerase assembly. Latches the N- and C-terminal regions of the beta' subunit thereby facilitating its interaction with the beta and alpha subunits. This Methylobacterium radiotolerans (strain ATCC 27329 / DSM 1819 / JCM 2831 / NBRC 15690 / NCIMB 10815 / 0-1) protein is DNA-directed RNA polymerase subunit omega.